Consider the following 170-residue polypeptide: Keratin-associated protein 9-2 (170 aa).

17 tandem repeats follow at residues 8-12 (CCQPT), 13-17 (CCRTT), 18-22 (CCRTT), 37-41 (CCQPT), 42-46 (CCVSS), 51-55 (CCCPT), 61-65 (CCRTT), 66-70 (CCQPT), 75-79 (CYQPS), 80-84 (CCSTP), 85-89 (CCQPT), 90-94 (CCGSS), 95-99 (CCGQT), 140-144 (CCHPA), 145-149 (CCETT), 150-154 (CCRTT), and 164-168 (CCQPS). Positions 8–168 (CCQPTCCRTT…TCVSSCCQPS (161 aa)) are 17 X 5 AA repeats of C-C-[RQVSGE]-[SPTQ]-[TASP].

Belongs to the KRTAP type 9 family. Interacts with hair keratins.

In terms of biological role, in the hair cortex, hair keratin intermediate filaments are embedded in an interfilamentous matrix, consisting of hair keratin-associated proteins (KRTAP), which are essential for the formation of a rigid and resistant hair shaft through their extensive disulfide bond cross-linking with abundant cysteine residues of hair keratins. The matrix proteins include the high-sulfur and high-glycine-tyrosine keratins. This chain is Keratin-associated protein 9-2 (KRTAP9-2), found in Pan troglodytes (Chimpanzee).